A 494-amino-acid polypeptide reads, in one-letter code: Bifunctional protein HldE (494 aa).

Positions 1-334 (MPTPILDFDA…RKILPHAYLA (334 aa)) are ribokinase. Residue 209 to 212 (NRKE) participates in ATP binding. Residue aspartate 279 is part of the active site. Residues 362–494 (FTNGCFDILH…LVHRARGGAK (133 aa)) form a cytidylyltransferase region.

The protein in the N-terminal section; belongs to the carbohydrate kinase PfkB family. This sequence in the C-terminal section; belongs to the cytidylyltransferase family. In terms of assembly, homodimer.

The catalysed reaction is D-glycero-beta-D-manno-heptose 7-phosphate + ATP = D-glycero-beta-D-manno-heptose 1,7-bisphosphate + ADP + H(+). It carries out the reaction D-glycero-beta-D-manno-heptose 1-phosphate + ATP + H(+) = ADP-D-glycero-beta-D-manno-heptose + diphosphate. Its pathway is nucleotide-sugar biosynthesis; ADP-L-glycero-beta-D-manno-heptose biosynthesis; ADP-L-glycero-beta-D-manno-heptose from D-glycero-beta-D-manno-heptose 7-phosphate: step 1/4. It functions in the pathway nucleotide-sugar biosynthesis; ADP-L-glycero-beta-D-manno-heptose biosynthesis; ADP-L-glycero-beta-D-manno-heptose from D-glycero-beta-D-manno-heptose 7-phosphate: step 3/4. Functionally, catalyzes the phosphorylation of D-glycero-D-manno-heptose 7-phosphate at the C-1 position to selectively form D-glycero-beta-D-manno-heptose-1,7-bisphosphate. In terms of biological role, catalyzes the ADP transfer from ATP to D-glycero-beta-D-manno-heptose 1-phosphate, yielding ADP-D-glycero-beta-D-manno-heptose. This chain is Bifunctional protein HldE, found in Bradyrhizobium diazoefficiens (strain JCM 10833 / BCRC 13528 / IAM 13628 / NBRC 14792 / USDA 110).